The primary structure comprises 428 residues: MLDPKFLRTELDATAERLASRGFALDTAHLSQLEETRKSLQVETEELQASRNAISKSIGQAKSRGEDVSAIMAQVGDLGSKLDAKKAELAELLHAINLIAMSTPNLPDESVPCGKDETENLEVRRWGTPRSFDFPVKDHLDLGEALGGLDFKSAVKITGSRFIVMKGQLARLNRALGQFMLDLHTQEHGYTETYVPLLVNEDSLLGTGQLPKFGEDLFHTKPATEEGQGLSLIPTAEVPLTNLVRDTIVEVSDLPLKFTAQTSCFRSEAGSYGRDTRGLIRQHQFEKVELVQIVKPEDSMQALEELTLHAEKVLQLLGLPYRTMLLCTGDMGFGASKTYDLEVWLPAQNTYREISSCSNMKDFQARRMQARYRNPEDNKPALLHTLNGSGLAVGRTLVAILENYQNADGSITVPDVLHKYMGGTTLIG.

Residue 235-237 coordinates L-serine; the sequence is TAE. 266 to 268 contributes to the ATP binding site; that stretch reads RSE. Residue Glu-289 participates in L-serine binding. Residue 353-356 participates in ATP binding; it reads EISS. Ser-389 lines the L-serine pocket.

The protein belongs to the class-II aminoacyl-tRNA synthetase family. Type-1 seryl-tRNA synthetase subfamily. As to quaternary structure, homodimer. The tRNA molecule binds across the dimer.

The protein resides in the cytoplasm. The catalysed reaction is tRNA(Ser) + L-serine + ATP = L-seryl-tRNA(Ser) + AMP + diphosphate + H(+). It carries out the reaction tRNA(Sec) + L-serine + ATP = L-seryl-tRNA(Sec) + AMP + diphosphate + H(+). The protein operates within aminoacyl-tRNA biosynthesis; selenocysteinyl-tRNA(Sec) biosynthesis; L-seryl-tRNA(Sec) from L-serine and tRNA(Sec): step 1/1. Functionally, catalyzes the attachment of serine to tRNA(Ser). Is also able to aminoacylate tRNA(Sec) with serine, to form the misacylated tRNA L-seryl-tRNA(Sec), which will be further converted into selenocysteinyl-tRNA(Sec). The protein is Serine--tRNA ligase of Shewanella denitrificans (strain OS217 / ATCC BAA-1090 / DSM 15013).